The following is a 308-amino-acid chain: Isoflavone reductase homolog (308 aa).

Residues 11-17 (GGTGYIG), Arg-36, and Lys-45 each bind NADP(+). Lys-133 (proton acceptor) is an active-site residue. NADP(+) is bound at residue Arg-137.

This sequence belongs to the NmrA-type oxidoreductase family. Isoflavone reductase subfamily.

The protein localises to the cytoplasm. This chain is Isoflavone reductase homolog, found in Solanum tuberosum (Potato).